Consider the following 117-residue polypeptide: Holo-[acyl-carrier-protein] synthase (117 aa).

2 residues coordinate Mg(2+): aspartate 8 and glutamate 55.

Belongs to the P-Pant transferase superfamily. AcpS family. Mg(2+) serves as cofactor.

The protein resides in the cytoplasm. The enzyme catalyses apo-[ACP] + CoA = holo-[ACP] + adenosine 3',5'-bisphosphate + H(+). In terms of biological role, transfers the 4'-phosphopantetheine moiety from coenzyme A to a Ser of acyl-carrier-protein. The polypeptide is Holo-[acyl-carrier-protein] synthase (Finegoldia magna (strain ATCC 29328 / DSM 20472 / WAL 2508) (Peptostreptococcus magnus)).